Consider the following 118-residue polypeptide: MAVVGVGVDVVDVDRFAATLARTPGIAMRLFTATERGLARPERLAARFAAKEAVAKVLGAPPGLEWHDTEVVLGTGGRPSLRIIGTVAAAAARLGIASWHLSLTHDGGVAVAMVVAET.

Positions 9 and 52 each coordinate Mg(2+).

It belongs to the P-Pant transferase superfamily. AcpS family. Mg(2+) serves as cofactor.

Its subcellular location is the cytoplasm. The enzyme catalyses apo-[ACP] + CoA = holo-[ACP] + adenosine 3',5'-bisphosphate + H(+). Its function is as follows. Transfers the 4'-phosphopantetheine moiety from coenzyme A to a Ser of acyl-carrier-protein. The sequence is that of Holo-[acyl-carrier-protein] synthase from Frankia casuarinae (strain DSM 45818 / CECT 9043 / HFP020203 / CcI3).